The chain runs to 461 residues: Bifunctional protein GlmU (461 aa).

The pyrophosphorylase stretch occupies residues Met1–Arg229. UDP-N-acetyl-alpha-D-glucosamine-binding positions include Leu8–Gly11, Lys22, Gln72, and Gly77–Thr78. Asp102 provides a ligand contact to Mg(2+). Residues Gly139, Glu154, Asn169, and Asn227 each coordinate UDP-N-acetyl-alpha-D-glucosamine. Asn227 serves as a coordination point for Mg(2+). Positions Val230–Asp250 are linker. The interval Gly251–Glu461 is N-acetyltransferase. UDP-N-acetyl-alpha-D-glucosamine contacts are provided by Arg332 and Lys350. The Proton acceptor role is filled by His362. Tyr365 and Asn376 together coordinate UDP-N-acetyl-alpha-D-glucosamine. Acetyl-CoA is bound by residues Asn385–Tyr386, Ala422, and Arg439.

In the N-terminal section; belongs to the N-acetylglucosamine-1-phosphate uridyltransferase family. The protein in the C-terminal section; belongs to the transferase hexapeptide repeat family. Homotrimer. Mg(2+) serves as cofactor.

It localises to the cytoplasm. The enzyme catalyses alpha-D-glucosamine 1-phosphate + acetyl-CoA = N-acetyl-alpha-D-glucosamine 1-phosphate + CoA + H(+). It catalyses the reaction N-acetyl-alpha-D-glucosamine 1-phosphate + UTP + H(+) = UDP-N-acetyl-alpha-D-glucosamine + diphosphate. It functions in the pathway nucleotide-sugar biosynthesis; UDP-N-acetyl-alpha-D-glucosamine biosynthesis; N-acetyl-alpha-D-glucosamine 1-phosphate from alpha-D-glucosamine 6-phosphate (route II): step 2/2. The protein operates within nucleotide-sugar biosynthesis; UDP-N-acetyl-alpha-D-glucosamine biosynthesis; UDP-N-acetyl-alpha-D-glucosamine from N-acetyl-alpha-D-glucosamine 1-phosphate: step 1/1. Its pathway is bacterial outer membrane biogenesis; LPS lipid A biosynthesis. Catalyzes the last two sequential reactions in the de novo biosynthetic pathway for UDP-N-acetylglucosamine (UDP-GlcNAc). The C-terminal domain catalyzes the transfer of acetyl group from acetyl coenzyme A to glucosamine-1-phosphate (GlcN-1-P) to produce N-acetylglucosamine-1-phosphate (GlcNAc-1-P), which is converted into UDP-GlcNAc by the transfer of uridine 5-monophosphate (from uridine 5-triphosphate), a reaction catalyzed by the N-terminal domain. This Lactobacillus helveticus (strain DPC 4571) protein is Bifunctional protein GlmU.